The sequence spans 278 residues: 4-deoxy-L-threo-5-hexosulose-uronate ketol-isomerase (278 aa).

Residues histidine 196, histidine 198, glutamate 203, and histidine 245 each contribute to the Zn(2+) site.

It belongs to the KduI family. The cofactor is Zn(2+).

The catalysed reaction is 5-dehydro-4-deoxy-D-glucuronate = 3-deoxy-D-glycero-2,5-hexodiulosonate. It functions in the pathway glycan metabolism; pectin degradation; 2-dehydro-3-deoxy-D-gluconate from pectin: step 4/5. Functionally, catalyzes the isomerization of 5-dehydro-4-deoxy-D-glucuronate to 3-deoxy-D-glycero-2,5-hexodiulosonate. In Shigella flexneri serotype 5b (strain 8401), this protein is 4-deoxy-L-threo-5-hexosulose-uronate ketol-isomerase.